Reading from the N-terminus, the 20-residue chain is Cytochrome P450IIB (20 aa).

It belongs to the cytochrome P450 family. Requires heme as cofactor.

The protein localises to the endoplasmic reticulum membrane. Its subcellular location is the microsome membrane. It carries out the reaction an organic molecule + reduced [NADPH--hemoprotein reductase] + O2 = an alcohol + oxidized [NADPH--hemoprotein reductase] + H2O + H(+). Cytochromes P450 are a group of heme-thiolate monooxygenases. In liver microsomes, this enzyme is involved in an NADPH-dependent electron transport pathway. This isozyme is active upon P.nitroanisole, aniline, D-benzphetamine, delta(9)-tetrahydrocannabinol (THC) and strychnine. This Cavia porcellus (Guinea pig) protein is Cytochrome P450IIB.